Here is a 288-residue protein sequence, read N- to C-terminus: ATP phosphoribosyltransferase (288 aa).

It belongs to the ATP phosphoribosyltransferase family. Long subfamily. The cofactor is Mg(2+).

The protein resides in the cytoplasm. The enzyme catalyses 1-(5-phospho-beta-D-ribosyl)-ATP + diphosphate = 5-phospho-alpha-D-ribose 1-diphosphate + ATP. It participates in amino-acid biosynthesis; L-histidine biosynthesis; L-histidine from 5-phospho-alpha-D-ribose 1-diphosphate: step 1/9. Its activity is regulated as follows. Feedback inhibited by histidine. Its function is as follows. Catalyzes the condensation of ATP and 5-phosphoribose 1-diphosphate to form N'-(5'-phosphoribosyl)-ATP (PR-ATP). Has a crucial role in the pathway because the rate of histidine biosynthesis seems to be controlled primarily by regulation of HisG enzymatic activity. This is ATP phosphoribosyltransferase from Methanococcus maripaludis (strain C7 / ATCC BAA-1331).